Here is a 390-residue protein sequence, read N- to C-terminus: Imidazolonepropionase (390 aa).

2 residues coordinate Fe(3+): His-71 and His-73. Positions 71 and 73 each coordinate Zn(2+). 4-imidazolone-5-propanoate-binding residues include Arg-80, Tyr-138, and His-165. An N-formimidoyl-L-glutamate-binding site is contributed by Tyr-138. His-228 provides a ligand contact to Fe(3+). His-228 serves as a coordination point for Zn(2+). A 4-imidazolone-5-propanoate-binding site is contributed by Gln-231. Asp-302 provides a ligand contact to Fe(3+). Position 302 (Asp-302) interacts with Zn(2+). Asn-304 and Gly-306 together coordinate N-formimidoyl-L-glutamate. Residue Ser-307 participates in 4-imidazolone-5-propanoate binding.

This sequence belongs to the metallo-dependent hydrolases superfamily. HutI family. The cofactor is Zn(2+). Fe(3+) serves as cofactor.

It is found in the cytoplasm. It catalyses the reaction 4-imidazolone-5-propanoate + H2O = N-formimidoyl-L-glutamate. The protein operates within amino-acid degradation; L-histidine degradation into L-glutamate; N-formimidoyl-L-glutamate from L-histidine: step 3/3. Its function is as follows. Catalyzes the hydrolytic cleavage of the carbon-nitrogen bond in imidazolone-5-propanoate to yield N-formimidoyl-L-glutamate. It is the third step in the universal histidine degradation pathway. This chain is Imidazolonepropionase, found in Streptomyces griseus subsp. griseus (strain JCM 4626 / CBS 651.72 / NBRC 13350 / KCC S-0626 / ISP 5235).